A 717-amino-acid chain; its full sequence is Mitochondrial potassium channel ATP-binding subunit (717 aa).

The transit peptide at 1 to 25 directs the protein to the mitochondrion; sequence MLVHLFRFGIRGGPVPGWSLQSLRF. Helical transmembrane passes span 127–147, 178–198, 278–298, and 365–385; these read LLAL…NVQI, VQLL…LVLL, LMLA…GSGL, and NIAF…LVAG. An ABC transmembrane type-1 domain is found at 132-419; it reads AAIVLALGAA…LSVLFGQVVR (288 aa). The ABC transporter domain occupies 454–691; the sequence is ITFQNVTFSY…GGLYSELIRR (238 aa). 489–496 serves as a coordination point for ATP; sequence GQSGGGKT. The tract at residues 695-717 is disordered; it reads DASLTSTPPAEKPEDPKSCQSKA.

The protein belongs to the ABC transporter superfamily. ABCB family. Multidrug resistance exporter (TC 3.A.1.201) subfamily. As to quaternary structure, the mitochondrial potassium channel (mitoK(ATP)) is composed of 4 subunits of CCDC51/MITOK and 4 subunits of ABCB8/MITOSUR. Interacts with PAAT. Interacts with NRP1; NRP1 regulates ABCB8/MITOSUR protein levels in mitochondria.

It localises to the mitochondrion inner membrane. Its activity is regulated as follows. Channel activity inhibited by ATP via ABCB8/MITOSUR subunit. In terms of biological role, ATP-binding subunit of the mitochondrial ATP-gated potassium channel (mitoK(ATP)). Together with pore-forming subunit CCDC51/MITOK of the mitoK(ATP) channel, mediates ATP-dependent potassium currents across the mitochondrial inner membrane. An increase in ATP intracellular levels closes the channel, inhibiting K(+) transport, whereas a decrease in ATP levels enhances K(+) uptake in the mitochondrial matrix. Plays a role in mitochondrial iron transport. Required for maintenance of normal cardiac function, possibly by influencing mitochondrial iron export and regulating the maturation of cytosolic iron sulfur cluster-containing enzymes. The chain is Mitochondrial potassium channel ATP-binding subunit from Mus musculus (Mouse).